The following is an 882-amino-acid chain: MTDVTVKSLAEEIKTSVDRLVQQFFDAGIKKSQTDTVTQQEKEKLLAHLNRQQGTVDNQLTLQRKTRSVLNIQVTGGKSKTVHIEVRKKRTYVNPSVTKPEAPLPEEENAQIPKITKNTFSQESLNKTSPQKSLKTKAIEKAKIESPKKERHSLKEKQKKEAQSEKARREAEASSLKRFAEEEVRRKVEEEAKRVAEQARKMAIENEAKWSELVADQIDSVDYHVTTSEHARAAEDENDAKVEGDRRSRHRGTKTTKQKKTNKLSESKTDREEARAVVRKSKRKPSALQQSFNKPVVALNRDVVIGETISVAELANKMAVKGSQVIKAMMKLGAMATINQVIDQETAQLVAEEMGHKVILRRENELEEALMSDRDTGVLTVHRAPVVTIMGHVDHGKTSLLDYIRSTKVATGEAGGITQHIGAYHVETENGMITFLDTPGHAAFTSMRARGAQATDIVVLVVAADDGVMPQTIEAIQHAKAAKVPVVVAVNKIDKAEADPDRVKKELIQHGIQPEEWGGDSQFIHVSAKVGTGIDDLLNAILLQAEVLELKAVKSGMANGVVIESFLDKGRGPVATVLVQEGTLNKGDIVLCGFQYGRVRAMRNELGREVISAGPSIPVEILGLSSVSSAGDAVTVVRDEKKAREVALYRQGKFREIKLARQQKSKLENMFDSLREGEISELNIVLKSDVQGSCEAIREALQKLSTDEVKIKIIGSGVGGITETDATLAAASNAIILGFNVRADAATRRLVEAENLNLRYYSVIYDLLDEVKQAMSGMLSPKYEQKIIGLAEVRDVFKSPKFGAIAGCMVVEGLIKRSSPIRVLRNNVVIYEGELESLRRFKDDVNEVRNGIECGIGVKNYDVQVNDTIEVFEIIEIKRTIS.

Disordered stretches follow at residues 95 to 176 (PSVT…ASSL) and 229 to 289 (EHAR…SALQ). Residues 116–133 (TKNTFSQESLNKTSPQKS) are compositionally biased toward polar residues. Basic and acidic residues-rich tracts occupy residues 137–172 (KAIE…REAE) and 229–246 (EHAR…EGDR). Residues 247 to 262 (RSRHRGTKTTKQKKTN) are compositionally biased toward basic residues. Over residues 263 to 276 (KLSESKTDREEARA) the composition is skewed to basic and acidic residues. Residues 382-551 (HRAPVVTIMG…LLQAEVLELK (170 aa)) form the tr-type G domain. The tract at residues 391–398 (GHVDHGKT) is G1. Position 391-398 (391-398 (GHVDHGKT)) interacts with GTP. The interval 416 to 420 (GITQH) is G2. The segment at 437–440 (DTPG) is G3. Residues 437–441 (DTPGH) and 491–494 (NKID) each bind GTP. A G4 region spans residues 491 to 494 (NKID). A G5 region spans residues 527 to 529 (SAK).

This sequence belongs to the TRAFAC class translation factor GTPase superfamily. Classic translation factor GTPase family. IF-2 subfamily.

Its subcellular location is the cytoplasm. One of the essential components for the initiation of protein synthesis. Protects formylmethionyl-tRNA from spontaneous hydrolysis and promotes its binding to the 30S ribosomal subunits. Also involved in the hydrolysis of GTP during the formation of the 70S ribosomal complex. The chain is Translation initiation factor IF-2 from Hamiltonella defensa subsp. Acyrthosiphon pisum (strain 5AT).